The primary structure comprises 61 residues: Large ribosomal subunit protein bL32 (61 aa).

It belongs to the bacterial ribosomal protein bL32 family.

The chain is Large ribosomal subunit protein bL32 from Syntrophus aciditrophicus (strain SB).